A 291-amino-acid chain; its full sequence is Verruculogen synthase (291 aa).

This sequence belongs to the PhyH family. Homodimer. Requires Fe cation as cofactor.

It carries out the reaction fumitremorgin B + 2-oxoglutarate + AH2 + 2 O2 = verruculogen + succinate + A + CO2 + H2O. The protein operates within mycotoxin biosynthesis. Verruculogen synthase; part of the gene cluster that mediates the biosynthesis of fumitremorgins, indole alkaloids that carry not only intriguing chemical structures, but also interesting biological and pharmacological activities. The biosynthesis of fumitremorgin-type alkaloids begins by condensation of the two amino acids L-tryptophan and L-proline to brevianamide F, catalyzed by the non-ribosomal peptide synthetase ftmPS/ftmA. Brevianamide F is then prenylated by the prenyltransferase ftmPT1/ftmB in the presence of dimethylallyl diphosphate, resulting in the formation of tryprostatin B. The three cytochrome P450 monooxygenases, ftmP450-1/ftmC, ftmP450-2/ftmE and ftmP450-3/FtmG, are responsible for the conversion of tryprostatin B to 6-hydroxytryprostatin B, tryprostatin A to fumitremorgin C and fumitremorgin C to 12,13-dihydroxyfumitremorgin C, respectively. The putative methyltransferase ftmMT/ftmD is expected for the conversion of 6-hydroxytryprostatin B to tryprostatin A. FtmPT2/FtmH catalyzes the prenylation of 12,13-dihydroxyfumitre-morgin C in the presence of dimethylallyl diphosphate, resulting in the formation of fumitremorgin B. Fumitremorgin B is further converted to verruculogen by ftmOx1/ftmF via the insertion of an endoperoxide bond between the two prenyl moieties. Finally, verruculogen is further converted to fumitremorgin A by the verruculogen prenyltransferase ftmPT3. The polypeptide is Verruculogen synthase (Neosartorya fischeri (strain ATCC 1020 / DSM 3700 / CBS 544.65 / FGSC A1164 / JCM 1740 / NRRL 181 / WB 181) (Aspergillus fischerianus)).